A 131-amino-acid chain; its full sequence is Universal stress protein C (131 aa).

The protein belongs to the universal stress protein A family.

The protein resides in the cytoplasm. Functionally, required for resistance to DNA-damaging agents. The polypeptide is Universal stress protein C (uspC) (Salmonella typhi).